An 876-amino-acid polypeptide reads, in one-letter code: Exonuclease mut-7 homolog (876 aa).

Positions 517 to 571 (GLSLLVQQVLGTALDKTQQLSNWDRRPLCEEQVIYAAADAYCLLEVHQALCREPA) constitute a 3'-5' exonuclease domain. Disordered stretches follow at residues 578–607 (DLAG…APAA) and 751–781 (SHQE…AAPE).

This sequence belongs to the mut-7 family. Mg(2+) is required as a cofactor.

In terms of biological role, possesses 3'-5' exoribonuclease activity. Required for 3'-end trimming of AGO1-bound miRNAs. The polypeptide is Exonuclease mut-7 homolog (EXD3) (Homo sapiens (Human)).